The sequence spans 316 residues: Bifunctional riboflavin kinase/FMN adenylyltransferase (316 aa).

This sequence belongs to the RibF family.

The catalysed reaction is riboflavin + ATP = FMN + ADP + H(+). It catalyses the reaction FMN + ATP + H(+) = FAD + diphosphate. It functions in the pathway cofactor biosynthesis; FAD biosynthesis; FAD from FMN: step 1/1. Its pathway is cofactor biosynthesis; FMN biosynthesis; FMN from riboflavin (ATP route): step 1/1. Catalyzes the phosphorylation of riboflavin to FMN followed by the adenylation of FMN to FAD. This chain is Bifunctional riboflavin kinase/FMN adenylyltransferase (ribC), found in Bacillus subtilis (strain 168).